The sequence spans 282 residues: B3 domain-containing protein At5g06250 (282 aa).

The TF-B3 DNA-binding region spans 46 to 159 (FEKSLTPSDV…RLFIGWRRRG (114 aa)).

It is found in the nucleus. In Arabidopsis thaliana (Mouse-ear cress), this protein is B3 domain-containing protein At5g06250.